The following is a 506-amino-acid chain: UDP-N-acetylmuramoylalanine--D-glutamate ligase (506 aa).

128–134 (GTNGKTT) is an ATP binding site.

Belongs to the MurCDEF family.

Its subcellular location is the cytoplasm. It carries out the reaction UDP-N-acetyl-alpha-D-muramoyl-L-alanine + D-glutamate + ATP = UDP-N-acetyl-alpha-D-muramoyl-L-alanyl-D-glutamate + ADP + phosphate + H(+). It participates in cell wall biogenesis; peptidoglycan biosynthesis. Its function is as follows. Cell wall formation. Catalyzes the addition of glutamate to the nucleotide precursor UDP-N-acetylmuramoyl-L-alanine (UMA). The sequence is that of UDP-N-acetylmuramoylalanine--D-glutamate ligase from Albidiferax ferrireducens (strain ATCC BAA-621 / DSM 15236 / T118) (Rhodoferax ferrireducens).